Consider the following 259-residue polypeptide: Insulin-induced gene 1 protein (259 aa).

The Cytoplasmic portion of the chain corresponds to 1-66; the sequence is MPRLHDHVWS…ARPGSWHHDL (66 aa). The disordered stretch occupies residues 33-57; sequence PQGPGAPEPEPAPRGQREGTAGFSA. A helical membrane pass occupies residues 67 to 89; sequence VQRSLVLFSFGVVLALVLNLLQI. Over 90-108 the chain is Extracellular; it reads QRNVTLFPDEVIATIFSSA. A helical membrane pass occupies residues 109-126; it reads WWVPPCCGTAAAVVGLLY. Residues 127–141 are Cytoplasmic-facing; the sequence is PCIDSHLGEPHKFKR. Glycyl lysine isopeptide (Lys-Gly) (interchain with G-Cter in ubiquitin) cross-links involve residues lysine 138 and lysine 140. Residues 142–164 form a helical membrane-spanning segment; sequence EWASVMRCIAVFVGINHASAKLD. Topologically, residues 165–167 are extracellular; the sequence is FAN. A helical membrane pass occupies residues 168–186; the sequence is NVQLSLTLAALSLGLWWTF. The Cytoplasmic portion of the chain corresponds to 187–191; that stretch reads DRSRS. Phosphoserine is present on serine 189. A helical membrane pass occupies residues 192 to 213; that stretch reads GLGLGITIAFLATLITQFLVYN. Topologically, residues 214-227 are extracellular; it reads GVYQYTSPDFLYIR. Residues 228–245 form a helical membrane-spanning segment; that stretch reads SWLPCIFFSGGVTVGNIG. Residues 246–259 are Cytoplasmic-facing; that stretch reads RQLAMGVPEKPHSD. Residues 253–259 carry the KxHxx motif; sequence PEKPHSD.

This sequence belongs to the INSIG family. Interacts with SCAP; interaction is direct and only takes place in the presence of sterols; it prevents interaction between SCAP and the coat protein complex II (COPII). Associates with the SCAP-SREBP complex (composed of SCAP and SREBF1/SREBP1 or SREBF2/SREBP2); association is mediated via its interaction with SCAP and only takes place in the presence of sterols. Interaction with SCAP is mutually exclusive with PAQR3. Interacts with HMGCR (via its SSD); the interaction, accelerated by sterols, leads to the recruitment of HMGCR to AMFR/gp78 for its ubiquitination by the sterol-mediated ERAD pathway. Interacts with AMFR/gp78 (via its membrane domain); the interaction recruits HMCR at the ER membrane for its ubiquitination and degradation by the sterol-mediated ERAD pathway. Interacts with SOAT2/ACAT2; leading to promote recruitment of AMFR/gp78 and subsequent ubiquitination of SOAT2/ACAT2. Interacts with RNF139. Interacts with RNF145. Post-translationally, phosphorylation at Ser-189 by PCK1 reduces binding to oxysterol, disrupting the interaction between INSIG1 and SCAP, thereby promoting nuclear translocation of SREBP proteins (SREBF1/SREBP1 or SREBF2/SREBP2) and subsequent transcription of downstream lipogenesis-related genes. Ubiquitinated by AMFR/gp78 in response to sterol deprivation, leading to its degradation: when the SCAP-SREBP complex becomes dissociated from INSIG1, INSIG1 is then ubiquitinated and degraded in proteasomes. Although ubiquitination is required for rapid INSIG1 degradation, it is not required for release of the SCAP-SREBP complex. Ubiquitinated by RNF139. In terms of tissue distribution, highly expressed in liver and kidney.

It is found in the endoplasmic reticulum membrane. Its function is as follows. Oxysterol-binding protein that mediates feedback control of cholesterol synthesis by controlling both endoplasmic reticulum to Golgi transport of SCAP and degradation of HMGCR. Acts as a negative regulator of cholesterol biosynthesis by mediating the retention of the SCAP-SREBP complex in the endoplasmic reticulum, thereby blocking the processing of sterol regulatory element-binding proteins (SREBPs) SREBF1/SREBP1 and SREBF2/SREBP2. Binds oxysterol, including 25-hydroxycholesterol, regulating interaction with SCAP and retention of the SCAP-SREBP complex in the endoplasmic reticulum. In presence of oxysterol, interacts with SCAP, retaining the SCAP-SREBP complex in the endoplasmic reticulum, thereby preventing SCAP from escorting SREBF1/SREBP1 and SREBF2/SREBP2 to the Golgi. Sterol deprivation or phosphorylation by PCK1 reduce oxysterol-binding, disrupting the interaction between INSIG1 and SCAP, thereby promoting Golgi transport of the SCAP-SREBP complex, followed by processing and nuclear translocation of SREBF1/SREBP1 and SREBF2/SREBP2. Also regulates cholesterol synthesis by regulating degradation of HMGCR: initiates the sterol-mediated ubiquitin-mediated endoplasmic reticulum-associated degradation (ERAD) of HMGCR via recruitment of the reductase to the ubiquitin ligases AMFR/gp78 and/or RNF139. Also regulates degradation of SOAT2/ACAT2 when the lipid levels are low: initiates the ubiquitin-mediated degradation of SOAT2/ACAT2 via recruitment of the ubiquitin ligases AMFR/gp78. The sequence is that of Insulin-induced gene 1 protein from Rattus norvegicus (Rat).